We begin with the raw amino-acid sequence, 272 residues long: Isoprenyl transferase (272 aa).

The active site involves D32. D32 serves as a coordination point for Mg(2+). Residues G33–R36, W37, R45, H49, and S77–E79 each bind substrate. N80 functions as the Proton acceptor in the catalytic mechanism. Residues W81, R83, R200, and R206 to S208 each bind substrate. E219 lines the Mg(2+) pocket.

It belongs to the UPP synthase family. Homodimer. The cofactor is Mg(2+).

Functionally, catalyzes the condensation of isopentenyl diphosphate (IPP) with allylic pyrophosphates generating different type of terpenoids. This is Isoprenyl transferase from Prochlorococcus marinus subsp. pastoris (strain CCMP1986 / NIES-2087 / MED4).